Here is a 351-residue protein sequence, read N- to C-terminus: Methylthioribose-1-phosphate isomerase (351 aa).

Residues 51-53 (RGA), R94, and Q199 contribute to the substrate site. D240 functions as the Proton donor in the catalytic mechanism. 250–251 (NK) contributes to the substrate binding site.

The protein belongs to the eIF-2B alpha/beta/delta subunits family. MtnA subfamily. As to quaternary structure, homodimer.

It catalyses the reaction 5-(methylsulfanyl)-alpha-D-ribose 1-phosphate = 5-(methylsulfanyl)-D-ribulose 1-phosphate. The protein operates within amino-acid biosynthesis; L-methionine biosynthesis via salvage pathway; L-methionine from S-methyl-5-thio-alpha-D-ribose 1-phosphate: step 1/6. Catalyzes the interconversion of methylthioribose-1-phosphate (MTR-1-P) into methylthioribulose-1-phosphate (MTRu-1-P). The protein is Methylthioribose-1-phosphate isomerase of Bacillus cereus (strain ATCC 10987 / NRS 248).